A 237-amino-acid chain; its full sequence is UPF0174 protein YaaW (237 aa).

Belongs to the UPF0174 family.

This chain is UPF0174 protein YaaW (yaaW), found in Escherichia coli (strain K12).